The primary structure comprises 157 residues: Peptide methionine sulfoxide reductase MsrA (157 aa).

Residue Cys-10 is part of the active site.

This sequence belongs to the MsrA Met sulfoxide reductase family.

The enzyme catalyses L-methionyl-[protein] + [thioredoxin]-disulfide + H2O = L-methionyl-(S)-S-oxide-[protein] + [thioredoxin]-dithiol. It carries out the reaction [thioredoxin]-disulfide + L-methionine + H2O = L-methionine (S)-S-oxide + [thioredoxin]-dithiol. In terms of biological role, has an important function as a repair enzyme for proteins that have been inactivated by oxidation. Catalyzes the reversible oxidation-reduction of methionine sulfoxide in proteins to methionine. The protein is Peptide methionine sulfoxide reductase MsrA of Clostridium perfringens (strain SM101 / Type A).